We begin with the raw amino-acid sequence, 478 residues long: Elongation factor Tu, chloroplastic (478 aa).

The span at 1–29 (MASISAATATSSTKLVSSNSTNPLLPSST) shows a compositional bias: low complexity. Positions 1–31 (MASISAATATSSTKLVSSNSTNPLLPSSTKP) are disordered. The N-terminal 69 residues, 1–69 (MASISAATAT…THRHRRFTVR (69 aa)), are a transit peptide targeting the chloroplast. The tr-type G domain occupies 79–283 (KPHVNIGTIG…AVDSYIPIPV (205 aa)). The G1 stretch occupies residues 88–95 (GHVDHGKT). 88–95 (GHVDHGKT) provides a ligand contact to GTP. The interval 129-133 (GITIN) is G2. The tract at residues 150–153 (DCPG) is G3. GTP contacts are provided by residues 150-154 (DCPGH) and 205-208 (NKQD). Residues 205 to 208 (NKQD) are G4. Positions 243 to 245 (SAL) are G5.

This sequence belongs to the TRAFAC class translation factor GTPase superfamily. Classic translation factor GTPase family. EF-Tu/EF-1A subfamily.

Its subcellular location is the plastid. The protein resides in the chloroplast. Its function is as follows. This protein promotes the GTP-dependent binding of aminoacyl-tRNA to the A-site of ribosomes during protein biosynthesis. In Nicotiana tabacum (Common tobacco), this protein is Elongation factor Tu, chloroplastic (TUFA).